A 466-amino-acid polypeptide reads, in one-letter code: L-seryl-tRNA(Sec) selenium transferase (466 aa).

N6-(pyridoxal phosphate)lysine is present on K292.

The protein belongs to the SelA family. Pyridoxal 5'-phosphate serves as cofactor.

The protein resides in the cytoplasm. The enzyme catalyses L-seryl-tRNA(Sec) + selenophosphate + H(+) = L-selenocysteinyl-tRNA(Sec) + phosphate. Its pathway is aminoacyl-tRNA biosynthesis; selenocysteinyl-tRNA(Sec) biosynthesis; selenocysteinyl-tRNA(Sec) from L-seryl-tRNA(Sec) (bacterial route): step 1/1. Its function is as follows. Converts seryl-tRNA(Sec) to selenocysteinyl-tRNA(Sec) required for selenoprotein biosynthesis. The polypeptide is L-seryl-tRNA(Sec) selenium transferase (Rhizobium meliloti (strain 1021) (Ensifer meliloti)).